Consider the following 190-residue polypeptide: Xanthine phosphoribosyltransferase (190 aa).

Leu20 and Asn27 together coordinate xanthine. 128–132 provides a ligand contact to 5-phospho-alpha-D-ribose 1-diphosphate; sequence ANGKA. Xanthine is bound at residue Lys156.

Belongs to the purine/pyrimidine phosphoribosyltransferase family. Xpt subfamily. As to quaternary structure, homodimer.

The protein localises to the cytoplasm. The enzyme catalyses XMP + diphosphate = xanthine + 5-phospho-alpha-D-ribose 1-diphosphate. It participates in purine metabolism; XMP biosynthesis via salvage pathway; XMP from xanthine: step 1/1. Its function is as follows. Converts the preformed base xanthine, a product of nucleic acid breakdown, to xanthosine 5'-monophosphate (XMP), so it can be reused for RNA or DNA synthesis. This chain is Xanthine phosphoribosyltransferase, found in Pseudomonas fluorescens (strain SBW25).